We begin with the raw amino-acid sequence, 349 residues long: Fructose-1,6-bisphosphatase class 1 (349 aa).

Residues Glu-113, Asp-135, Ile-137, and Asp-138 each contribute to the Mg(2+) site. Substrate-binding positions include 138 to 141 (DGSS), Asn-230, Tyr-258, and Lys-288. Glu-294 is a binding site for Mg(2+).

This sequence belongs to the FBPase class 1 family. In terms of assembly, homotetramer. The cofactor is Mg(2+).

The protein localises to the cytoplasm. It carries out the reaction beta-D-fructose 1,6-bisphosphate + H2O = beta-D-fructose 6-phosphate + phosphate. It participates in carbohydrate biosynthesis; Calvin cycle. This is Fructose-1,6-bisphosphatase class 1 from Trichormus variabilis (strain ATCC 29413 / PCC 7937) (Anabaena variabilis).